We begin with the raw amino-acid sequence, 381 residues long: Protein-glutamate methylesterase/protein-glutamine glutaminase (381 aa).

Residues 20–138 (RVMVVDDSVV…EIAAADIFKH (119 aa)) enclose the Response regulatory domain. Asp-71 carries the post-translational modification 4-aspartylphosphate. A disordered region spans residues 154 to 176 (PAALASAREPEPRPIQATPVPAH). One can recognise a CheB-type methylesterase domain in the interval 183–373 (PFSTHAPRAL…PLQQIAPKLV (191 aa)). Active-site residues include Ser-197, His-225, and Asp-321.

It belongs to the CheB family. Phosphorylated by CheA. Phosphorylation of the N-terminal regulatory domain activates the methylesterase activity.

It localises to the cytoplasm. The catalysed reaction is [protein]-L-glutamate 5-O-methyl ester + H2O = L-glutamyl-[protein] + methanol + H(+). It catalyses the reaction L-glutaminyl-[protein] + H2O = L-glutamyl-[protein] + NH4(+). In terms of biological role, involved in chemotaxis. Part of a chemotaxis signal transduction system that modulates chemotaxis in response to various stimuli. Catalyzes the demethylation of specific methylglutamate residues introduced into the chemoreceptors (methyl-accepting chemotaxis proteins or MCP) by CheR. Also mediates the irreversible deamidation of specific glutamine residues to glutamic acid. This is Protein-glutamate methylesterase/protein-glutamine glutaminase from Nitrobacter hamburgensis (strain DSM 10229 / NCIMB 13809 / X14).